Consider the following 200-residue polypeptide: Probable nicotinate-nucleotide adenylyltransferase (200 aa).

This sequence belongs to the NadD family.

It carries out the reaction nicotinate beta-D-ribonucleotide + ATP + H(+) = deamido-NAD(+) + diphosphate. Its pathway is cofactor biosynthesis; NAD(+) biosynthesis; deamido-NAD(+) from nicotinate D-ribonucleotide: step 1/1. Its function is as follows. Catalyzes the reversible adenylation of nicotinate mononucleotide (NaMN) to nicotinic acid adenine dinucleotide (NaAD). The polypeptide is Probable nicotinate-nucleotide adenylyltransferase (Clostridium botulinum (strain Eklund 17B / Type B)).